Consider the following 259-residue polypeptide: Phosphatidylglycerol--prolipoprotein diacylglyceryl transferase (259 aa).

The next 4 helical transmembrane spans lie at 9–29 (IIFY…VVGI), 55–75 (FITY…VLLY), 92–112 (EGGM…YLFC), and 117–137 (VNFL…LFLG). Arg-138 contacts a 1,2-diacyl-sn-glycero-3-phospho-(1'-sn-glycerol). Helical transmembrane passes span 172–192 (QLYE…YATF), 201–221 (GLNS…IEIF), and 228–248 (IGFI…MLIL).

It belongs to the Lgt family.

The protein localises to the cell inner membrane. The catalysed reaction is L-cysteinyl-[prolipoprotein] + a 1,2-diacyl-sn-glycero-3-phospho-(1'-sn-glycerol) = an S-1,2-diacyl-sn-glyceryl-L-cysteinyl-[prolipoprotein] + sn-glycerol 1-phosphate + H(+). Its pathway is protein modification; lipoprotein biosynthesis (diacylglyceryl transfer). Catalyzes the transfer of the diacylglyceryl group from phosphatidylglycerol to the sulfhydryl group of the N-terminal cysteine of a prolipoprotein, the first step in the formation of mature lipoproteins. The chain is Phosphatidylglycerol--prolipoprotein diacylglyceryl transferase from Rickettsia akari (strain Hartford).